The primary structure comprises 436 residues: GTPase Der (436 aa).

2 EngA-type G domains span residues 4 to 167 and 175 to 351; these read PTVA…PVEE and IRFS…ESQN. Residues 10 to 17, 57 to 61, 119 to 122, 181 to 188, 229 to 233, and 294 to 297 contribute to the GTP site; these read GRPNVGKS, DTGGI, NKVD, DTAGM, and NKWD. A KH-like domain is found at 352–436; the sequence is KRIPSAVLND…PIHLIARKRK (85 aa).

It belongs to the TRAFAC class TrmE-Era-EngA-EngB-Septin-like GTPase superfamily. EngA (Der) GTPase family. As to quaternary structure, associates with the 50S ribosomal subunit.

Functionally, GTPase that plays an essential role in the late steps of ribosome biogenesis. In Streptococcus pyogenes serotype M5 (strain Manfredo), this protein is GTPase Der.